Reading from the N-terminus, the 124-residue chain is Protein YebF (124 aa).

The first 27 residues, 1–27, serve as a signal peptide directing secretion; sequence MKTCHIINRVGLSGVALLLTVSFTVSA. Residues 36 to 123 enclose the YebF/Cmi domain; that stretch reads KFISCDNLTK…QQNTISYSEL (88 aa). The cysteines at positions 40 and 113 are disulfide-linked.

This sequence belongs to the YebF family.

It is found in the secreted. This is Protein YebF from Photorhabdus laumondii subsp. laumondii (strain DSM 15139 / CIP 105565 / TT01) (Photorhabdus luminescens subsp. laumondii).